A 351-amino-acid chain; its full sequence is DNA polymerase IV (351 aa).

A UmuC domain is found at 4–185 (IIHVDMDCFF…LPLAKIPGVG (182 aa)). Positions 8 and 103 each coordinate Mg(2+). E104 is an active-site residue.

This sequence belongs to the DNA polymerase type-Y family. As to quaternary structure, monomer. Mg(2+) serves as cofactor.

It is found in the cytoplasm. It carries out the reaction DNA(n) + a 2'-deoxyribonucleoside 5'-triphosphate = DNA(n+1) + diphosphate. In terms of biological role, poorly processive, error-prone DNA polymerase involved in untargeted mutagenesis. Copies undamaged DNA at stalled replication forks, which arise in vivo from mismatched or misaligned primer ends. These misaligned primers can be extended by PolIV. Exhibits no 3'-5' exonuclease (proofreading) activity. May be involved in translesional synthesis, in conjunction with the beta clamp from PolIII. This Shigella dysenteriae serotype 1 (strain Sd197) protein is DNA polymerase IV.